The chain runs to 394 residues: Ribulose bisphosphate carboxylase large chain (394 aa).

K5 is subject to N6,N6,N6-trimethyllysine. Positions 114 and 164 each coordinate substrate. The active-site Proton acceptor is the K166. K168 provides a ligand contact to substrate. Positions 192, 194, and 195 each coordinate Mg(2+). At K192 the chain carries N6-carboxylysine. H285 (proton acceptor) is an active-site residue. R286, H318, and S370 together coordinate substrate.

The protein belongs to the RuBisCO large chain family. Type I subfamily. In terms of assembly, heterohexadecamer of 8 large chains and 8 small chains. Mg(2+) serves as cofactor.

It localises to the plastid. The protein localises to the chloroplast. The catalysed reaction is 2 (2R)-3-phosphoglycerate + 2 H(+) = D-ribulose 1,5-bisphosphate + CO2 + H2O. The enzyme catalyses D-ribulose 1,5-bisphosphate + O2 = 2-phosphoglycolate + (2R)-3-phosphoglycerate + 2 H(+). In terms of biological role, ruBisCO catalyzes two reactions: the carboxylation of D-ribulose 1,5-bisphosphate, the primary event in carbon dioxide fixation, as well as the oxidative fragmentation of the pentose substrate in the photorespiration process. Both reactions occur simultaneously and in competition at the same active site. This is Ribulose bisphosphate carboxylase large chain (rbcL) from Nymphaea odorata (White water lily).